Reading from the N-terminus, the 523-residue chain is Apoptosis inhibitor 5 (523 aa).

The ARM-like and Heat-like helical repeats stretch occupies residues 1 to 360; it reads MPTVEELYRN…HQLGRKLPDF (360 aa). Residues 446–523 form a disordered region; it reads VQKADANQKR…RGNRSRGRIY (78 aa). The short motif at 454–475 is the Nuclear localization signal element; that stretch reads KRTSEDTTSSSPPKKASAGPKR. Over residues 460–471 the composition is skewed to low complexity; that stretch reads TTSSSPPKKASA. Residues 487–497 are compositionally biased toward polar residues; it reads KYSSNLGSFSY. Residues 502–515 show a composition bias toward gly residues; that stretch reads GFRGGRGRGWGGRG.

Belongs to the API5 family. In terms of assembly, monomer.

It localises to the nucleus. It is found in the cytoplasm. Antiapoptotic factor that may have a role in protein assembly. This is Apoptosis inhibitor 5 (API5) from Gallus gallus (Chicken).